We begin with the raw amino-acid sequence, 444 residues long: 23S rRNA (uracil(1939)-C(5))-methyltransferase RlmD (444 aa).

The 63-residue stretch at 5-67 (RNRLDRTPFQ…RHFDEAKTVG (63 aa)) folds into the TRAM domain. [4Fe-4S] cluster is bound by residues cysteine 80, cysteine 86, cysteine 89, and cysteine 168. S-adenosyl-L-methionine-binding residues include glutamine 276, phenylalanine 305, asparagine 310, glutamate 326, aspartate 353, and aspartate 374. The Nucleophile role is filled by cysteine 400.

The protein belongs to the class I-like SAM-binding methyltransferase superfamily. RNA M5U methyltransferase family. RlmD subfamily.

It carries out the reaction uridine(1939) in 23S rRNA + S-adenosyl-L-methionine = 5-methyluridine(1939) in 23S rRNA + S-adenosyl-L-homocysteine + H(+). Functionally, catalyzes the formation of 5-methyl-uridine at position 1939 (m5U1939) in 23S rRNA. The polypeptide is 23S rRNA (uracil(1939)-C(5))-methyltransferase RlmD (Xanthomonas axonopodis pv. citri (strain 306)).